The sequence spans 283 residues: Tyrosine recombinase THA_404 (283 aa).

Positions 1 to 86 constitute a Core-binding (CB) domain; it reads MDKVIEMFSD…SLNSFFNYLE (86 aa). The region spanning 107-281 is the Tyr recombinase domain; that stretch reads KIPDFLTEDE…ADQEKFDAVK (175 aa). Active-site residues include arginine 145, lysine 170, histidine 233, arginine 236, and histidine 259. Tyrosine 268 acts as the O-(3'-phospho-DNA)-tyrosine intermediate in catalysis.

It belongs to the 'phage' integrase family.

It is found in the cytoplasm. Its function is as follows. Site-specific tyrosine recombinase, which acts by catalyzing the cutting and rejoining of the recombining DNA molecules. The polypeptide is Tyrosine recombinase THA_404 (Thermosipho africanus (strain TCF52B)).